The primary structure comprises 191 residues: 3-isopropylmalate dehydratase small subunit (191 aa).

The protein belongs to the LeuD family. LeuD type 1 subfamily. In terms of assembly, heterodimer of LeuC and LeuD.

It carries out the reaction (2R,3S)-3-isopropylmalate = (2S)-2-isopropylmalate. The protein operates within amino-acid biosynthesis; L-leucine biosynthesis; L-leucine from 3-methyl-2-oxobutanoate: step 2/4. Catalyzes the isomerization between 2-isopropylmalate and 3-isopropylmalate, via the formation of 2-isopropylmaleate. The chain is 3-isopropylmalate dehydratase small subunit from Solibacter usitatus (strain Ellin6076).